The sequence spans 347 residues: Anthranilate phosphoribosyltransferase (347 aa).

5-phospho-alpha-D-ribose 1-diphosphate contacts are provided by residues G88, 91–92 (GD), T96, 98–101 (NIST), 116–124 (KHGNRAASS), and S128. G88 is an anthranilate binding site. S100 serves as a coordination point for Mg(2+). N119 provides a ligand contact to anthranilate. R174 contributes to the anthranilate binding site. Mg(2+)-binding residues include D233 and E234.

This sequence belongs to the anthranilate phosphoribosyltransferase family. Homodimer. Mg(2+) serves as cofactor.

The catalysed reaction is N-(5-phospho-beta-D-ribosyl)anthranilate + diphosphate = 5-phospho-alpha-D-ribose 1-diphosphate + anthranilate. It functions in the pathway amino-acid biosynthesis; L-tryptophan biosynthesis; L-tryptophan from chorismate: step 2/5. Its function is as follows. Catalyzes the transfer of the phosphoribosyl group of 5-phosphorylribose-1-pyrophosphate (PRPP) to anthranilate to yield N-(5'-phosphoribosyl)-anthranilate (PRA). The protein is Anthranilate phosphoribosyltransferase of Rhodospirillum rubrum (strain ATCC 11170 / ATH 1.1.1 / DSM 467 / LMG 4362 / NCIMB 8255 / S1).